We begin with the raw amino-acid sequence, 121 residues long: Holo-[acyl-carrier-protein] synthase (121 aa).

The Mg(2+) site is built by Asp-8 and Glu-58.

The protein belongs to the P-Pant transferase superfamily. AcpS family. In terms of assembly, homotrimer. Mg(2+) is required as a cofactor.

The protein localises to the cytoplasm. The enzyme catalyses apo-[ACP] + CoA = holo-[ACP] + adenosine 3',5'-bisphosphate + H(+). In terms of biological role, transfers the 4'-phosphopantetheine moiety from coenzyme A to a Ser of fatty acid acyl-carrier-protein ACP. Also modifies the D-alanyl carrier protein but fails to recognize PCP and AcpK, an acyl carrier protein of secondary metabolism. In Bacillus subtilis (strain 168), this protein is Holo-[acyl-carrier-protein] synthase.